The primary structure comprises 152 residues: UPF0266 membrane protein YobD (152 aa).

The next 3 helical transmembrane spans lie at Leu6 to Met26, Ile45 to His65, and Ala67 to Ile87.

It belongs to the UPF0266 family.

Its subcellular location is the cell inner membrane. In Escherichia coli O127:H6 (strain E2348/69 / EPEC), this protein is UPF0266 membrane protein YobD.